The following is a 226-amino-acid chain: V-type proton ATPase subunit E 1 (226 aa).

A2 bears the N-acetylalanine mark. At Y56 the chain carries Phosphotyrosine.

It belongs to the V-ATPase E subunit family. As to quaternary structure, V-ATPase is a heteromultimeric enzyme made up of two complexes: the ATP-hydrolytic V1 complex and the proton translocation V0 complex. The V1 complex consists of three catalytic AB heterodimers that form a heterohexamer, three peripheral stalks each consisting of EG heterodimers, one central rotor including subunits D and F, and the regulatory subunits C and H. The proton translocation complex V0 consists of the proton transport subunit a, a ring of proteolipid subunits c9c'', rotary subunit d, subunits e and f, and the accessory subunits ATP6AP1/Ac45 and ATP6AP2/PRR. Interacts with RABL2/RABL2A; binds preferentially to GTP-bound RABL2. Interacts with ALDOC. Interacts with RAB11B. Kidney; localizes to early distal nephron, encompassing thick ascending limbs and distal convoluted tubules (at protein level). Ubiquitous. High expression in the skin.

It localises to the apical cell membrane. It is found in the cytoplasmic vesicle. The protein localises to the secretory vesicle. The protein resides in the synaptic vesicle membrane. Its subcellular location is the clathrin-coated vesicle membrane. Functionally, subunit of the V1 complex of vacuolar(H+)-ATPase (V-ATPase), a multisubunit enzyme composed of a peripheral complex (V1) that hydrolyzes ATP and a membrane integral complex (V0) that translocates protons. V-ATPase is responsible for acidifying and maintaining the pH of intracellular compartments and in some cell types, is targeted to the plasma membrane, where it is responsible for acidifying the extracellular environment. This is V-type proton ATPase subunit E 1 (ATP6V1E1) from Homo sapiens (Human).